A 446-amino-acid chain; its full sequence is MLAVAILAAGKGTRMKSCLPKVLQPLAGSTLVERVLTSCSGLQPQRRLLIVGHQAQEVQQQLTDWQGLEFVVQQPQNGTGHAVQQVLPVLEGFDGELLVLNGDVPLLRPSTIEHLVNEHRSSGADVTLLTARLADPTGYGRVFSDQQGRVSSIVEHRDCSDEQRHNNLTNAGIYCFNWKKLAAVLPQLCSDNDQGELYLTDTVALLPIAMHVEVADPDEVNGINDRCQLANCEALLQERLRNYWMKEGVTFTDPASCTLSEDCQFGRDVVIEPQTHLRGCCNIGDGCQLGPGSLIENAELGHGVSVLHSVVCDAKVGNEVAIGPFSHLRPGAGIADQCRIGNFVEIKKSQIGEGSKVNHLSYIGDAQLGRHVNVGAGTITANYDGVRKHLTVVGDNSKTGANSVLVAPIVLGSDVTVGAGSTLTKDVPNGALALGRSKQLIKNGWQ.

Residues 1–226 (MLAVAILAAG…PDEVNGINDR (226 aa)) are pyrophosphorylase. UDP-N-acetyl-alpha-D-glucosamine is bound by residues 7 to 10 (LAAG), K21, Q73, and 78 to 79 (GT). D103 serves as a coordination point for Mg(2+). UDP-N-acetyl-alpha-D-glucosamine contacts are provided by G140, E155, N170, and N224. A Mg(2+)-binding site is contributed by N224. The segment at 227-247 (CQLANCEALLQERLRNYWMKE) is linker. The interval 248–446 (GVTFTDPASC…SKQLIKNGWQ (199 aa)) is N-acetyltransferase. UDP-N-acetyl-alpha-D-glucosamine-binding residues include R329 and K347. Residue H359 is the Proton acceptor of the active site. Y362 and N373 together coordinate UDP-N-acetyl-alpha-D-glucosamine. Residues A376, 382-383 (NY), A419, and R436 contribute to the acetyl-CoA site.

In the N-terminal section; belongs to the N-acetylglucosamine-1-phosphate uridyltransferase family. This sequence in the C-terminal section; belongs to the transferase hexapeptide repeat family. Homotrimer. It depends on Mg(2+) as a cofactor.

The protein resides in the cytoplasm. The catalysed reaction is alpha-D-glucosamine 1-phosphate + acetyl-CoA = N-acetyl-alpha-D-glucosamine 1-phosphate + CoA + H(+). It carries out the reaction N-acetyl-alpha-D-glucosamine 1-phosphate + UTP + H(+) = UDP-N-acetyl-alpha-D-glucosamine + diphosphate. Its pathway is nucleotide-sugar biosynthesis; UDP-N-acetyl-alpha-D-glucosamine biosynthesis; N-acetyl-alpha-D-glucosamine 1-phosphate from alpha-D-glucosamine 6-phosphate (route II): step 2/2. It functions in the pathway nucleotide-sugar biosynthesis; UDP-N-acetyl-alpha-D-glucosamine biosynthesis; UDP-N-acetyl-alpha-D-glucosamine from N-acetyl-alpha-D-glucosamine 1-phosphate: step 1/1. The protein operates within bacterial outer membrane biogenesis; LPS lipid A biosynthesis. Its function is as follows. Catalyzes the last two sequential reactions in the de novo biosynthetic pathway for UDP-N-acetylglucosamine (UDP-GlcNAc). The C-terminal domain catalyzes the transfer of acetyl group from acetyl coenzyme A to glucosamine-1-phosphate (GlcN-1-P) to produce N-acetylglucosamine-1-phosphate (GlcNAc-1-P), which is converted into UDP-GlcNAc by the transfer of uridine 5-monophosphate (from uridine 5-triphosphate), a reaction catalyzed by the N-terminal domain. The polypeptide is Bifunctional protein GlmU (Prochlorococcus marinus (strain MIT 9313)).